A 1829-amino-acid polypeptide reads, in one-letter code: Iron-regulated protein FrpC (1829 aa).

Hemolysin-type calcium-binding repeat units follow at residues 869–886 (FGHN…NDTL), 887–904 (IGGA…SDTY), 1015–1032 (NGGL…DDLL), 1033–1050 (NGDA…NDTL), 1051–1068 (NGGE…NDAL), 1069–1086 (NGGE…NDTL), 1087–1104 (IGGA…SDTY), 1215–1232 (NGGL…DDLL), 1233–1250 (NGDA…NDTL), 1251–1268 (DGGE…NDAL), 1269–1286 (NGGE…NDTL), 1287–1304 (IGGA…SDTY), 1415–1432 (NGGL…DDLL), 1433–1450 (NGDA…NDTL), 1451–1468 (DGGE…NDAL), 1469–1486 (NGGE…NDTL), 1487–1504 (IGGA…SDTY), 1615–1632 (NGGL…DDLL), 1633–1650 (NGDA…NDTL), 1651–1668 (NGGE…NDVL), 1669–1686 (NGGE…NDTL), and 1687–1704 (IGGA…SDTY).

This sequence belongs to the RTX prokaryotic toxin (TC 1.C.11) family.

The protein localises to the cell outer membrane. The protein resides in the secreted. Functionally, may participate in the pathogenesis of meningococcal disease. This Neisseria meningitidis serogroup C protein is Iron-regulated protein FrpC (frpC).